The sequence spans 149 residues: Histone H3-like 1 (149 aa).

The segment covering 1 to 19 has biased composition (basic and acidic residues); sequence MARPRKEAPQRNLDRDENA. Positions 1 to 58 are disordered; it reads MARPRKEAPQRNLDRDENARQQPTEEPQDEAPRNQGRQQQQQRPPAAPRRPRRFRPGT. Residues 33-44 show a composition bias toward low complexity; the sequence is RNQGRQQQQQRP.

The protein belongs to the histone H3 family. In terms of assembly, the nucleosome is a histone octamer containing two molecules each of H2A, H2B, H3 and H4 assembled in one H3-H4 heterotetramer and two H2A-H2B heterodimers. The octamer wraps approximately 147 bp of DNA. Pollen specific.

The protein resides in the nucleus. The protein localises to the chromosome. In terms of biological role, core component of nucleosome. Nucleosomes wrap and compact DNA into chromatin, limiting DNA accessibility to the cellular machineries which require DNA as a template. Histones thereby play a central role in transcription regulation, DNA repair, DNA replication and chromosomal stability. DNA accessibility is regulated via a complex set of post-translational modifications of histones, also called histone code, and nucleosome remodeling. The protein is Histone H3-like 1 (gH3) of Lilium longiflorum (Trumpet lily).